Reading from the N-terminus, the 309-residue chain is Glutaminase (309 aa).

7 residues coordinate substrate: Ser-65, Asn-117, Glu-162, Asn-169, Tyr-193, Tyr-245, and Val-263.

It belongs to the glutaminase family. As to quaternary structure, homotetramer.

The enzyme catalyses L-glutamine + H2O = L-glutamate + NH4(+). The sequence is that of Glutaminase from Bacillus cytotoxicus (strain DSM 22905 / CIP 110041 / 391-98 / NVH 391-98).